The sequence spans 208 residues: UPF0637 protein BCB4264_A4063 (208 aa).

This sequence belongs to the UPF0637 family.

This chain is UPF0637 protein BCB4264_A4063, found in Bacillus cereus (strain B4264).